We begin with the raw amino-acid sequence, 1407 residues long: DNA-directed RNA polymerase subunit beta' (1407 aa).

Zn(2+) is bound by residues cysteine 70, cysteine 72, cysteine 85, and cysteine 88. Mg(2+) is bound by residues aspartate 460, aspartate 462, and aspartate 464. Zn(2+) contacts are provided by cysteine 814, cysteine 888, cysteine 895, and cysteine 898.

This sequence belongs to the RNA polymerase beta' chain family. In terms of assembly, the RNAP catalytic core consists of 2 alpha, 1 beta, 1 beta' and 1 omega subunit. When a sigma factor is associated with the core the holoenzyme is formed, which can initiate transcription. It depends on Mg(2+) as a cofactor. Zn(2+) serves as cofactor.

It carries out the reaction RNA(n) + a ribonucleoside 5'-triphosphate = RNA(n+1) + diphosphate. Functionally, DNA-dependent RNA polymerase catalyzes the transcription of DNA into RNA using the four ribonucleoside triphosphates as substrates. The polypeptide is DNA-directed RNA polymerase subunit beta' (Cellvibrio japonicus (strain Ueda107) (Pseudomonas fluorescens subsp. cellulosa)).